The following is a 215-amino-acid chain: Proteasome subunit beta inpE (215 aa).

The protein belongs to the peptidase T1B family.

It is found in the cytoplasm. The protein localises to the nucleus. The enzyme catalyses Cleavage of peptide bonds with very broad specificity.. Proteasome subunit beta type-6; part of the inp gene cluster that mediates the biosynthesis of fellutamide B, a mycotoxin that acts as a proteasome inhibitor. In the first step of fellutabmide B biosynthesis inpC activates 3-hydroxydodecanoic acid to generate 3-hydroxydodecanoyl-AMP that is then loaded onto the T0 domain of inpB. The 3-hydroxydodecanoyl-S-phosphopantetheinyl-T0 is sequentially extended with L-Asn and L-Gln by the two CAT modules of inpB. The linear lipodipeptide from inpB is then transferred onto inpA for the addition of the third amino acid, L-Leu. Reductive releasing of the lipotripeptide by the TE domain of inpA produces (2S)-fellutamide B. InpF might be involved in the release and transfer of the lipodipeptide from inpB to inpA. The inp cluster-encoded proteasome subunit inpE confers resistance to internally produced fellutamides. The MFS efflux transporter inpD may contribute to fellutamide resistance as well. In Emericella nidulans (strain FGSC A4 / ATCC 38163 / CBS 112.46 / NRRL 194 / M139) (Aspergillus nidulans), this protein is Proteasome subunit beta inpE (inpE).